The following is a 205-amino-acid chain: Molybdenum cofactor guanylyltransferase (205 aa).

GTP is bound by residues 14-16 (LAG), lysine 27, aspartate 77, and aspartate 107. Position 107 (aspartate 107) interacts with Mg(2+).

The protein belongs to the MobA family. In terms of assembly, monomer. It depends on Mg(2+) as a cofactor.

It localises to the cytoplasm. It catalyses the reaction Mo-molybdopterin + GTP + H(+) = Mo-molybdopterin guanine dinucleotide + diphosphate. In terms of biological role, transfers a GMP moiety from GTP to Mo-molybdopterin (Mo-MPT) cofactor (Moco or molybdenum cofactor) to form Mo-molybdopterin guanine dinucleotide (Mo-MGD) cofactor. This is Molybdenum cofactor guanylyltransferase from Burkholderia cenocepacia (strain HI2424).